Consider the following 279-residue polypeptide: D-aminoacyl-tRNA deacylase (279 aa).

Residues 81-100 (GRKSLTVHHPGNPTEDNSLG) form a disordered region.

The protein belongs to the DtdA deacylase family. In terms of assembly, monomer. Zn(2+) is required as a cofactor.

It catalyses the reaction a D-aminoacyl-tRNA + H2O = a tRNA + a D-alpha-amino acid + H(+). The enzyme catalyses glycyl-tRNA(Ala) + H2O = tRNA(Ala) + glycine + H(+). Its function is as follows. D-aminoacyl-tRNA deacylase with broad substrate specificity. By recycling D-aminoacyl-tRNA to D-amino acids and free tRNA molecules, this enzyme counteracts the toxicity associated with the formation of D-aminoacyl-tRNA entities in vivo. This is D-aminoacyl-tRNA deacylase from Aeropyrum pernix (strain ATCC 700893 / DSM 11879 / JCM 9820 / NBRC 100138 / K1).